The primary structure comprises 1081 residues: Carbamoyl phosphate synthase large chain (1081 aa).

A carboxyphosphate synthetic domain region spans residues M1 to E410. 12 residues coordinate ATP: R129, R176, G182, G183, E215, L217, E222, G248, I249, H250, Q292, and E306. Residues K133–V335 enclose the ATP-grasp 1 domain. Residues Q292, E306, and N308 each coordinate Mg(2+). Mn(2+)-binding residues include Q292, E306, and N308. Positions V411–A558 are oligomerization domain. Residues D559–G944 form a carbamoyl phosphate synthetic domain region. The ATP-grasp 2 domain maps to Q683–A878. 10 residues coordinate ATP: R719, R758, L760, E765, G790, V791, H792, S793, Q833, and E849. Q833, E849, and N851 together coordinate Mg(2+). Mn(2+) contacts are provided by Q833, E849, and N851. The region spanning S945–L1081 is the MGS-like domain. The allosteric domain stretch occupies residues S945–L1081.

Belongs to the CarB family. Composed of two chains; the small (or glutamine) chain promotes the hydrolysis of glutamine to ammonia, which is used by the large (or ammonia) chain to synthesize carbamoyl phosphate. Tetramer of heterodimers (alpha,beta)4. The cofactor is Mg(2+). Mn(2+) is required as a cofactor.

It catalyses the reaction hydrogencarbonate + L-glutamine + 2 ATP + H2O = carbamoyl phosphate + L-glutamate + 2 ADP + phosphate + 2 H(+). It carries out the reaction hydrogencarbonate + NH4(+) + 2 ATP = carbamoyl phosphate + 2 ADP + phosphate + 2 H(+). It functions in the pathway amino-acid biosynthesis; L-arginine biosynthesis; carbamoyl phosphate from bicarbonate: step 1/1. It participates in pyrimidine metabolism; UMP biosynthesis via de novo pathway; (S)-dihydroorotate from bicarbonate: step 1/3. Functionally, large subunit of the glutamine-dependent carbamoyl phosphate synthetase (CPSase). CPSase catalyzes the formation of carbamoyl phosphate from the ammonia moiety of glutamine, carbonate, and phosphate donated by ATP, constituting the first step of 2 biosynthetic pathways, one leading to arginine and/or urea and the other to pyrimidine nucleotides. The large subunit (synthetase) binds the substrates ammonia (free or transferred from glutamine from the small subunit), hydrogencarbonate and ATP and carries out an ATP-coupled ligase reaction, activating hydrogencarbonate by forming carboxy phosphate which reacts with ammonia to form carbamoyl phosphate. The protein is Carbamoyl phosphate synthase large chain of Ralstonia nicotianae (strain ATCC BAA-1114 / GMI1000) (Ralstonia solanacearum).